Reading from the N-terminus, the 214-residue chain is Adenylate kinase (214 aa).

10–15 (GAGKGT) is a binding site for ATP. Residues 30-59 (CTGDMLRAAVKAGSELGLKAKEIMDAGKLV) form an NMP region. Residues threonine 31, arginine 36, 57–59 (KLV), 85–88 (GFPR), and glutamine 92 each bind AMP. The segment at 122 to 159 (GRRVHAASGRVYHIKFNPPKVEDKDDVTGEELTIRKDD) is LID. ATP contacts are provided by residues arginine 123 and 132-133 (VY). The AMP site is built by arginine 156 and arginine 167. Arginine 200 is a binding site for ATP.

The protein belongs to the adenylate kinase family. In terms of assembly, monomer.

It is found in the cytoplasm. It catalyses the reaction AMP + ATP = 2 ADP. It functions in the pathway purine metabolism; AMP biosynthesis via salvage pathway; AMP from ADP: step 1/1. In terms of biological role, catalyzes the reversible transfer of the terminal phosphate group between ATP and AMP. Plays an important role in cellular energy homeostasis and in adenine nucleotide metabolism. The polypeptide is Adenylate kinase (Yersinia enterocolitica).